A 106-amino-acid chain; its full sequence is 1-deoxy-D-xylulose 5-phosphate reductoisomerase (106 aa).

Asp-3 serves as a coordination point for Mn(2+). 1-deoxy-D-xylulose 5-phosphate is bound by residues Ser-4, Glu-5, Ser-29, His-52, Ser-65, Asn-70, Lys-71, and Glu-74. Glu-5 provides a ligand contact to Mn(2+). Residue Glu-74 participates in Mn(2+) binding.

It belongs to the DXR family. Mn(2+) is required as a cofactor. Requires Mg(2+) as cofactor.

Its subcellular location is the plastid. The protein localises to the chloroplast stroma. It carries out the reaction 2-C-methyl-D-erythritol 4-phosphate + NADP(+) = 1-deoxy-D-xylulose 5-phosphate + NADPH + H(+). It participates in isoprenoid biosynthesis; isopentenyl diphosphate biosynthesis via DXP pathway; isopentenyl diphosphate from 1-deoxy-D-xylulose 5-phosphate: step 1/6. Enzyme of the plastid non-mevalonate pathway for isoprenoid biosynthesis that catalyzes the NADPH-dependent rearrangement and reduction of 1-deoxy-D-xylulose-5-phosphate (DXP) to 2-C-methyl-D-erythritol 4-phosphate (MEP). Required for chloroplast development. The chain is 1-deoxy-D-xylulose 5-phosphate reductoisomerase from Origanum vulgare (Wild marjoram).